The sequence spans 83 residues: MLVLSRRAGESVVLGEDVVVTILEVRGDVVRVGIDAPRSVRVHRAELLAQLEETNRQAASPSEDVIANLARALDHGTGTDPSS.

Belongs to the CsrA/RsmA family. As to quaternary structure, homodimer; the beta-strands of each monomer intercalate to form a hydrophobic core, while the alpha-helices form wings that extend away from the core.

The protein resides in the cytoplasm. Functionally, a translational regulator that binds mRNA to regulate translation initiation and/or mRNA stability. Usually binds in the 5'-UTR at or near the Shine-Dalgarno sequence preventing ribosome-binding, thus repressing translation. Its main target seems to be the major flagellin gene, while its function is anatagonized by FliW. The chain is Translational regulator CsrA from Nocardioides sp. (strain ATCC BAA-499 / JS614).